The following is a 436-amino-acid chain: MKASGSLDSWREYFRRRGDSDIFGIIDHAIMVAATDCPNKFKSRRDKIAELLFSCRVNRCVGCDHLELSVPGDDEANRGTTGNGGGGTAVDEDYEVAGGSKESKANSSRGDNNQIVSNYTFDEAEALSDEIEEFSVVSKEVARIKEILLNKEDEPNSVLLDSLRHLKLMSLNVDILKSTEIGKAVNGLRKHSSDKIRQLAKTLIAEWKELVDQWVNTTKEITGAEGTPESANPSVLDEEEAFPSLPYDVDIFTPEPNGFEISHFFDSLDFDGNPRNSEEHNTSREHERRPQNIAKRKPEGTQMRIQDAPFRSIKPSSATDFDGTRRPVKQSTEQRMKNETVSVHKSEKPMIQRKPVVTEQKRKAPGPQQEKLKGLDADAKFEFAKRKLQESYQHHENAKKQRTIQVLEMIPKQGSAQKPQLKRPGMSNRNWANGRK.

The segment at Pro-71–Asp-111 is disordered. In terms of domain architecture, TFIIS N-terminal spans Lys-139–Trp-214. The disordered stretch occupies residues His-263 to Asp-376. Composition is skewed to basic and acidic residues over residues Asn-276 to Pro-290 and Thr-332 to Met-350. Residues Glu-382–Arg-402 adopt a coiled-coil conformation. Positions Glu-408–Lys-436 are disordered. Residues Ser-427–Lys-436 are compositionally biased toward polar residues.

This sequence belongs to the Mediator complex subunit 26 family. As to quaternary structure, component of the Mediator complex.

Its subcellular location is the nucleus. Its function is as follows. Component of the Mediator complex, a coactivator involved in the regulated transcription of nearly all RNA polymerase II-dependent genes. Mediator functions as a bridge to convey information from gene-specific regulatory proteins to the basal RNA polymerase II transcription machinery. The Mediator complex, having a compact conformation in its free form, is recruited to promoters by direct interactions with regulatory proteins and serves for the assembly of a functional preinitiation complex with RNA polymerase II and the general transcription factors. May play a role in transcription elongation. The sequence is that of Probable mediator of RNA polymerase II transcription subunit 26b (MED26B) from Arabidopsis thaliana (Mouse-ear cress).